Reading from the N-terminus, the 664-residue chain is NADH-ubiquinone oxidoreductase chain 5 (664 aa).

17 helical membrane-spanning segments follow: residues 2-22 (LLLTLIFLPFLGSVAAGLFGF), 28-48 (GSVFITTLTTFLSCIFSLIII), 77-97 (FLFDSLTMIMLVVVTSISTLV), 120-140 (LFTFFMIILVTGDNFMQMFVG), 168-188 (AMLVNRISDLILLLGVLTIFY), 210-230 (FIFFNYILSIIDVACILIFIG), 250-270 (GPTPVSALIHAATMVTAGVYL), 285-305 (LKIITIIGASTAFFASTVGLV), 321-341 (LGYMFFACGLSNYPLAIFHLS), 342-362 (NHAYFKALLFLCSGAVIHAMG), 376-396 (ILPFTYIMFLIGSLSLMGFPF), 424-444 (LGTIGAFFTAFYSTRLLFFAF), 462-482 (PLEMGIPLGLLAFGSIFIGYI), 521-541 (LPVILSFCGLFGAFYLYFFKF), 590-610 (IDKGLIEMCGPYGLTTIFSFL), 614-634 (IILLQTGYIYHYSLLMLISTI), and 639-659 (IIFFSIIYYFNIITILLFLFI).

It belongs to the complex I subunit 5 family.

It is found in the mitochondrion inner membrane. It carries out the reaction a ubiquinone + NADH + 5 H(+)(in) = a ubiquinol + NAD(+) + 4 H(+)(out). Its function is as follows. Core subunit of the mitochondrial membrane respiratory chain NADH dehydrogenase (Complex I) that is believed to belong to the minimal assembly required for catalysis. Complex I functions in the transfer of electrons from NADH to the respiratory chain. The immediate electron acceptor for the enzyme is believed to be ubiquinone. The sequence is that of NADH-ubiquinone oxidoreductase chain 5 (ND5) from Phytophthora infestans (Potato late blight agent).